A 2282-amino-acid polypeptide reads, in one-letter code: Serine/threonine-protein kinase TEL1 (2282 aa).

The region spanning 1325 to 1844 (EIVNSALTLH…LYQISSLMRT (520 aa)) is the FAT domain. Positions 1939–2250 (VLAQVIKAGG…LSGVKGKLAV (312 aa)) constitute a PI3K/PI4K catalytic domain. The tract at residues 1945–1951 (KAGGISH) is G-loop. Positions 2115 to 2123 (GIGDRHCNN) are catalytic loop. Residues 2135–2159 (HIDLGISFDQGKNLTVPEKVPFRLT) form an activation loop region. The region spanning 2250-2282 (VRLSTEAVVRELIGEAVSVENLAVIFHGWTPFY) is the FATC domain.

It belongs to the PI3/PI4-kinase family. ATM subfamily. As to quaternary structure, associates with DNA double-strand breaks.

The protein localises to the nucleus. It is found in the chromosome. It localises to the telomere. It catalyses the reaction L-seryl-[protein] + ATP = O-phospho-L-seryl-[protein] + ADP + H(+). The enzyme catalyses L-threonyl-[protein] + ATP = O-phospho-L-threonyl-[protein] + ADP + H(+). Serine/threonine protein kinase which activates checkpoint signaling upon genotoxic stresses such as ionizing radiation (IR), ultraviolet light (UV), or DNA replication stalling, thereby acting as a DNA damage sensor. Recognizes the substrate consensus sequence [ST]-Q. Phosphorylates histone H2A to form H2AS128ph (gamma-H2A) at sites of DNA damage, involved in the regulation of DNA damage response mechanism. Required for the control of telomere length and genome stability. The chain is Serine/threonine-protein kinase TEL1 (TEL1) from Yarrowia lipolytica (strain CLIB 122 / E 150) (Yeast).